The chain runs to 399 residues: Serine/threonine-protein kinase PknL (399 aa).

Residues 1–368 (MVEAGTRDPL…FIWARQHARR (368 aa)) lie on the Cytoplasmic side of the membrane. A Protein kinase domain is found at 19-278 (YLVQAKIASG…IAMGADLEAI (260 aa)). ATP contacts are provided by residues 25 to 33 (IASGGTSTV) and Lys-48. Asp-142 acts as the Proton acceptor in catalysis. The tract at residues 312–346 (GQLGAKPVHHPTRQLTRQPGDCSEPASGSEPEHEP) is disordered. Residues 369–389 (MVLVWVSVVLAITGLVASAAW) traverse the membrane as a helical segment. The Extracellular segment spans residues 390–399 (TIGSNLSGLL).

The protein belongs to the protein kinase superfamily. Ser/Thr protein kinase family. Autophosphorylated.

The protein localises to the cell membrane. The catalysed reaction is L-seryl-[protein] + ATP = O-phospho-L-seryl-[protein] + ADP + H(+). The enzyme catalyses L-threonyl-[protein] + ATP = O-phospho-L-threonyl-[protein] + ADP + H(+). This is Serine/threonine-protein kinase PknL (pknL) from Mycobacterium bovis (strain ATCC BAA-935 / AF2122/97).